Reading from the N-terminus, the 719-residue chain is Polyribonucleotide nucleotidyltransferase (719 aa).

Residues aspartate 507 and aspartate 513 each contribute to the Mg(2+) site. One can recognise a KH domain in the interval 573–633 (PKLELFSVDP…EQIKAAKDYI (61 aa)). The S1 motif domain occupies 658–719 (GQEFQGIVKK…NGKISVDLCE (62 aa)).

It belongs to the polyribonucleotide nucleotidyltransferase family. The cofactor is Mg(2+).

The protein resides in the cytoplasm. The catalysed reaction is RNA(n+1) + phosphate = RNA(n) + a ribonucleoside 5'-diphosphate. Involved in mRNA degradation. Catalyzes the phosphorolysis of single-stranded polyribonucleotides processively in the 3'- to 5'-direction. The protein is Polyribonucleotide nucleotidyltransferase of Campylobacter jejuni subsp. jejuni serotype O:23/36 (strain 81-176).